Consider the following 155-residue polypeptide: 2-C-methyl-D-erythritol 2,4-cyclodiphosphate synthase (155 aa).

A divalent metal cation contacts are provided by Asp9 and His11. 4-CDP-2-C-methyl-D-erythritol 2-phosphate contacts are provided by residues 9–11 (DSH) and 35–36 (HS). His43 is a binding site for a divalent metal cation. 4-CDP-2-C-methyl-D-erythritol 2-phosphate is bound at residue 57–59 (DIG).

The protein belongs to the IspF family. Homotrimer. The cofactor is a divalent metal cation.

It carries out the reaction 4-CDP-2-C-methyl-D-erythritol 2-phosphate = 2-C-methyl-D-erythritol 2,4-cyclic diphosphate + CMP. It participates in isoprenoid biosynthesis; isopentenyl diphosphate biosynthesis via DXP pathway; isopentenyl diphosphate from 1-deoxy-D-xylulose 5-phosphate: step 4/6. In terms of biological role, involved in the biosynthesis of isopentenyl diphosphate (IPP) and dimethylallyl diphosphate (DMAPP), two major building blocks of isoprenoid compounds. Catalyzes the conversion of 4-diphosphocytidyl-2-C-methyl-D-erythritol 2-phosphate (CDP-ME2P) to 2-C-methyl-D-erythritol 2,4-cyclodiphosphate (ME-CPP) with a corresponding release of cytidine 5-monophosphate (CMP). This chain is 2-C-methyl-D-erythritol 2,4-cyclodiphosphate synthase, found in Koribacter versatilis (strain Ellin345).